Here is a 260-residue protein sequence, read N- to C-terminus: MPSSKKVAPAPLATKSKASTSTKNPLFESTPKNFGIGQSIQPKRNLSRFVKWPEYVRLQRQKKILSLRLKVPPSIAQFSQTLDKNTAAQAFKLLNKYRPETSAEKKERLTKEAAAIAEGKTAKDVSPKPVVVKYGLNHVVSLIENKKAKLVLIANDVDPIELVVFLPALCKKMGVPYAIVKGKARLGTLVHKKTSAVAALTEVNSADEAELSKLVSTINANYIEKYEENRKHWGGGIMGSKANDKIAKKAKAAAAAVSTA.

Positions 1–34 (MPSSKKVAPAPLATKSKASTSTKNPLFESTPKNF) are disordered.

This sequence belongs to the eukaryotic ribosomal protein eL8 family. As to quaternary structure, component of the large ribosomal subunit. Mature ribosomes consist of a small (40S) and a large (60S) subunit. The 40S subunit contains about 32 different proteins and 1 molecule of RNA (18S). The 60S subunit contains 45 different proteins and 3 molecules of RNA (25S, 5.8S and 5S).

The protein localises to the cytoplasm. Component of the ribosome, a large ribonucleoprotein complex responsible for the synthesis of proteins in the cell. The small ribosomal subunit (SSU) binds messenger RNAs (mRNAs) and translates the encoded message by selecting cognate aminoacyl-transfer RNA (tRNA) molecules. The large subunit (LSU) contains the ribosomal catalytic site termed the peptidyl transferase center (PTC), which catalyzes the formation of peptide bonds, thereby polymerizing the amino acids delivered by tRNAs into a polypeptide chain. The nascent polypeptides leave the ribosome through a tunnel in the LSU and interact with protein factors that function in enzymatic processing, targeting, and the membrane insertion of nascent chains at the exit of the ribosomal tunnel. The protein is Large ribosomal subunit protein eL8A of Candida albicans (strain SC5314 / ATCC MYA-2876) (Yeast).